The sequence spans 190 residues: Threonylcarbamoyl-AMP synthase (190 aa).

Residues 7 to 190 (GDAIAAAIDV…ALTGELFRQG (184 aa)) enclose the YrdC-like domain.

This sequence belongs to the SUA5 family. TsaC subfamily.

It is found in the cytoplasm. It catalyses the reaction L-threonine + hydrogencarbonate + ATP = L-threonylcarbamoyladenylate + diphosphate + H2O. In terms of biological role, required for the formation of a threonylcarbamoyl group on adenosine at position 37 (t(6)A37) in tRNAs that read codons beginning with adenine. Catalyzes the conversion of L-threonine, HCO(3)(-)/CO(2) and ATP to give threonylcarbamoyl-AMP (TC-AMP) as the acyladenylate intermediate, with the release of diphosphate. This is Threonylcarbamoyl-AMP synthase from Escherichia coli O6:H1 (strain CFT073 / ATCC 700928 / UPEC).